We begin with the raw amino-acid sequence, 60 residues long: Mastoparan-VB2 (60 aa).

Positions 1 to 27 are cleaved as a signal peptide; the sequence is MKNTILLLFTAFIFLMGFFGMSADALA. AXPX repeat units follow at residues 27-30, 31-34, 35-38, and 41-44; these read ADPK, ADPL, AGPF, and ADPD. A propeptide spanning residues 28 to 45 is cleaved from the precursor; it reads DPKADPLAGPFPDADPDP. At Leu59 the chain carries Leucine amide.

This sequence belongs to the MCD family. Mastoparan subfamily. Expressed by the venom gland.

Its subcellular location is the secreted. It is found in the target cell membrane. Antimicrobial peptide. Shows activity against both Gram-positive and -negative bacteria, as well against fungi. Also promotes moderate mast cell degranulation. Does not show hemolytic activity on rabbit and human erythrocytes. Its mast cell degranulation activity may be related to the activation of G-protein coupled receptors in mast cells as well as interaction with other proteins located in cell endosomal membranes in the mast cells. This chain is Mastoparan-VB2, found in Vespa bicolor (Black shield wasp).